Reading from the N-terminus, the 130-residue chain is Small ribosomal subunit protein uS8 (130 aa).

It belongs to the universal ribosomal protein uS8 family. In terms of assembly, part of the 30S ribosomal subunit. Contacts proteins S5 and S12.

Functionally, one of the primary rRNA binding proteins, it binds directly to 16S rRNA central domain where it helps coordinate assembly of the platform of the 30S subunit. In Salmonella arizonae (strain ATCC BAA-731 / CDC346-86 / RSK2980), this protein is Small ribosomal subunit protein uS8.